A 282-amino-acid polypeptide reads, in one-letter code: tRNA pseudouridine synthase B (282 aa).

Residue D39 is the Nucleophile of the active site.

Belongs to the pseudouridine synthase TruB family. Type 1 subfamily.

It carries out the reaction uridine(55) in tRNA = pseudouridine(55) in tRNA. Functionally, responsible for synthesis of pseudouridine from uracil-55 in the psi GC loop of transfer RNAs. The sequence is that of tRNA pseudouridine synthase B from Borreliella burgdorferi (strain ATCC 35210 / DSM 4680 / CIP 102532 / B31) (Borrelia burgdorferi).